The chain runs to 464 residues: MSTDKTNQSWGGRFSEPVDAFVARFTASVDFDKRLYRHDIMGSIAHATMLAQVGVLSDAERDTIIDGLNTIQGEIEAGNFDWRVDLEDVHMNIEARLTDRIGITGKKLHTGRSRNDQVATDIRLWLRDEIDLILAEITRLQQGLLEQAEREAQTIMPGFTHLQTAQPVTFGHHLLAWFEMLSRDYERLVDCRKRTNRMPLGSAALAGTTYPIDRELTCKLLGFEAVAGNSLDGVSDRDFAIEFCAAASVAMMHLSRFSEELVLWTSAQFQFVDLPDRFCTGSSIMPQKKNPDVPELVRGKSGRVFGALTGLLTLMKGQPLAYNKDNQEDKEPLFDAADTLRDSLRAFADMIPAIKPRHAIMREAALRGFSTATDLADYLVRRGLPFRDCHEIVGHAVKYGVDTGKDLAEMSLDELRQFSDQIEQDVFAVLTLEGSVNARDHIGGTAPAQVLAAVVRGKALLASR.

It belongs to the lyase 1 family. Argininosuccinate lyase subfamily.

The protein resides in the cytoplasm. The catalysed reaction is 2-(N(omega)-L-arginino)succinate = fumarate + L-arginine. The protein operates within amino-acid biosynthesis; L-arginine biosynthesis; L-arginine from L-ornithine and carbamoyl phosphate: step 3/3. This Pseudomonas putida (strain W619) protein is Argininosuccinate lyase.